We begin with the raw amino-acid sequence, 146 residues long: Large ribosomal subunit protein uL15 (146 aa).

Residues 1–45 (MTIKLHHLRPAPGSKTERTRVGRGEGSKGKTAGRGTKGTKARKNV) are disordered. Residues 15–28 (KTERTRVGRGEGSK) are compositionally biased toward basic and acidic residues.

Belongs to the universal ribosomal protein uL15 family. As to quaternary structure, part of the 50S ribosomal subunit.

In terms of biological role, binds to the 23S rRNA. In Mycobacteroides abscessus (strain ATCC 19977 / DSM 44196 / CCUG 20993 / CIP 104536 / JCM 13569 / NCTC 13031 / TMC 1543 / L948) (Mycobacterium abscessus), this protein is Large ribosomal subunit protein uL15.